The chain runs to 75 residues: Protein EGO2 (75 aa).

This chain is Protein EGO2, found in Saccharomyces cerevisiae (strain ATCC 204508 / S288c) (Baker's yeast).